A 287-amino-acid chain; its full sequence is Mu-like prophage FluMu DNA transposition protein B (287 aa).

Positions 7–62 (LKQHLSDSQITQAQLAREAGVNAGALSAYLNDNYKGNIADVEAKLAAYLEKKAVQA) constitute an HTH cro/C1-type domain. A DNA-binding region (H-T-H motif) is located at residues 18 to 37 (QAQLAREAGVNAGALSAYLN). 98–105 (GMSGVGKT) contacts ATP.

Functionally, this protein is a non-specific DNA-binding and ATP-hydrolyzing protein essential for bacteriophage integration and replication. This Haemophilus influenzae (strain ATCC 51907 / DSM 11121 / KW20 / Rd) protein is Mu-like prophage FluMu DNA transposition protein B.